The chain runs to 595 residues: Aspartate--tRNA(Asp/Asn) ligase (595 aa).

Glutamate 177 contributes to the L-aspartate binding site. An aspartate region spans residues 201–204; the sequence is QQFK. Residue arginine 223 participates in L-aspartate binding. Residues 223–225 and glutamine 232 each bind ATP; that span reads RDE. Residue histidine 455 participates in L-aspartate binding. ATP is bound at residue glutamate 489. Arginine 496 is an L-aspartate binding site. An ATP-binding site is contributed by 542–545; the sequence is GLDR.

Belongs to the class-II aminoacyl-tRNA synthetase family. Type 1 subfamily. In terms of assembly, homodimer.

It is found in the cytoplasm. It carries out the reaction tRNA(Asx) + L-aspartate + ATP = L-aspartyl-tRNA(Asx) + AMP + diphosphate. Functionally, aspartyl-tRNA synthetase with relaxed tRNA specificity since it is able to aspartylate not only its cognate tRNA(Asp) but also tRNA(Asn). Reaction proceeds in two steps: L-aspartate is first activated by ATP to form Asp-AMP and then transferred to the acceptor end of tRNA(Asp/Asn). The polypeptide is Aspartate--tRNA(Asp/Asn) ligase (Opitutus terrae (strain DSM 11246 / JCM 15787 / PB90-1)).